We begin with the raw amino-acid sequence, 431 residues long: Enolase (431 aa).

Glutamine 167 contacts (2R)-2-phosphoglycerate. The Proton donor role is filled by glutamate 209. Mg(2+) is bound by residues aspartate 246, glutamate 290, and aspartate 317. Lysine 342, arginine 371, serine 372, and lysine 393 together coordinate (2R)-2-phosphoglycerate. The Proton acceptor role is filled by lysine 342.

It belongs to the enolase family. Component of the RNA degradosome, a multiprotein complex involved in RNA processing and mRNA degradation. Mg(2+) serves as cofactor.

It localises to the cytoplasm. The protein resides in the secreted. It is found in the cell surface. The enzyme catalyses (2R)-2-phosphoglycerate = phosphoenolpyruvate + H2O. It participates in carbohydrate degradation; glycolysis; pyruvate from D-glyceraldehyde 3-phosphate: step 4/5. Its function is as follows. Catalyzes the reversible conversion of 2-phosphoglycerate (2-PG) into phosphoenolpyruvate (PEP). It is essential for the degradation of carbohydrates via glycolysis. The chain is Enolase from Pectobacterium atrosepticum (strain SCRI 1043 / ATCC BAA-672) (Erwinia carotovora subsp. atroseptica).